Reading from the N-terminus, the 297-residue chain is MISPAKINLGLEIPFKRLDGFHEIRSVFLKISWGDDIEIEPASNGVFELFSNNEIILEKRKLYDQVSERGDIKNNILYKTFIKARSLFPELPGVKIHLTKRISPAGGLGGGSTNAASLLNFLFSWRPFFTSDEMFVLAAEIGSDVPFFLGEGHAFVTGKGEILEEIEVHHGQGILALTPQVMNTSEMYSLLKKPLQESASQKNGNTLSKNLISILKNGDWSSLQGRLWNDFEPVAFQLHPELGVLKDKFLEFGSSYCSLTGSGSSMYGLVQGLEIQEELLQRLRQEFSNLTFVRFNF.

Active-site residues include Lys-6 and Asp-144.

The protein belongs to the GHMP kinase family. IspE subfamily.

The enzyme catalyses 4-CDP-2-C-methyl-D-erythritol + ATP = 4-CDP-2-C-methyl-D-erythritol 2-phosphate + ADP + H(+). The protein operates within isoprenoid biosynthesis; isopentenyl diphosphate biosynthesis via DXP pathway; isopentenyl diphosphate from 1-deoxy-D-xylulose 5-phosphate: step 3/6. Catalyzes the phosphorylation of the position 2 hydroxy group of 4-diphosphocytidyl-2C-methyl-D-erythritol. The polypeptide is 4-diphosphocytidyl-2-C-methyl-D-erythritol kinase (Leptospira interrogans serogroup Icterohaemorrhagiae serovar Lai (strain 56601)).